The sequence spans 542 residues: Phosphoenolpyruvate carboxykinase (ATP) (542 aa).

Residues Arg67, Tyr208, and Lys214 each coordinate substrate. ATP is bound by residues Lys214, His233, and Gly249 to Thr257. Mn(2+) contacts are provided by Lys214 and His233. Residue Asp270 participates in Mn(2+) binding. ATP contacts are provided by residues Glu298, Arg334, Arg450 to Ile451, and Thr456. Residue Arg334 participates in substrate binding.

This sequence belongs to the phosphoenolpyruvate carboxykinase (ATP) family. In terms of assembly, monomer. Requires Mn(2+) as cofactor.

It localises to the cytoplasm. The catalysed reaction is oxaloacetate + ATP = phosphoenolpyruvate + ADP + CO2. It participates in carbohydrate biosynthesis; gluconeogenesis. Its function is as follows. Involved in the gluconeogenesis. Catalyzes the conversion of oxaloacetate (OAA) to phosphoenolpyruvate (PEP) through direct phosphoryl transfer between the nucleoside triphosphate and OAA. The sequence is that of Phosphoenolpyruvate carboxykinase (ATP) from Vibrio campbellii (strain ATCC BAA-1116).